The chain runs to 700 residues: Auxin response factor 18 (700 aa).

The TF-B3 DNA-binding region spans Phe-128–Lys-230. 2 disordered regions span residues Val-234–Gly-254 and Val-560–Ser-595. Positions Phe-239–Pro-250 are enriched in pro residues. Positions Ser-565–Leu-594 are enriched in polar residues. The region spanning Thr-614–Asn-697 is the PB1 domain.

It belongs to the ARF family. In terms of assembly, homodimers and heterodimers. In terms of tissue distribution, expressed in roots, culms, leaves and young panicles.

The protein localises to the nucleus. Its function is as follows. Auxin response factors (ARFs) are transcriptional factors that bind specifically to the DNA sequence 5'-TGTCTC-3' found in the auxin-responsive promoter elements (AuxREs). The chain is Auxin response factor 18 (ARF18) from Oryza sativa subsp. japonica (Rice).